Here is a 152-residue protein sequence, read N- to C-terminus: Large ribosomal subunit protein bL9 (152 aa).

The protein belongs to the bacterial ribosomal protein bL9 family.

Binds to the 23S rRNA. The protein is Large ribosomal subunit protein bL9 of Mycobacterium avium (strain 104).